A 132-amino-acid polypeptide reads, in one-letter code: MSSREFRYRGYTLEQLQTMTLDELANVMPSRIRRTLKRGLSIENKKLLDKIRKYKAMGIDKVIRTHRRDMPILPEMVGSKIAVHNGKEFVEITIVPEMIGHYLGEFAMTNRIVRHGKPGKGATRSSKFVPLK.

It belongs to the universal ribosomal protein uS19 family.

Its function is as follows. Protein S19 forms a complex with S13 that binds strongly to the 16S ribosomal RNA. In Korarchaeum cryptofilum (strain OPF8), this protein is Small ribosomal subunit protein uS19.